A 257-amino-acid polypeptide reads, in one-letter code: Thiazole synthase (257 aa).

Residue Lys96 is the Schiff-base intermediate with DXP of the active site. 1-deoxy-D-xylulose 5-phosphate-binding positions include Gly157, 184 to 185 (AG), and 206 to 207 (NT).

The protein belongs to the ThiG family. As to quaternary structure, homotetramer. Forms heterodimers with either ThiH or ThiS.

Its subcellular location is the cytoplasm. The enzyme catalyses [ThiS sulfur-carrier protein]-C-terminal-Gly-aminoethanethioate + 2-iminoacetate + 1-deoxy-D-xylulose 5-phosphate = [ThiS sulfur-carrier protein]-C-terminal Gly-Gly + 2-[(2R,5Z)-2-carboxy-4-methylthiazol-5(2H)-ylidene]ethyl phosphate + 2 H2O + H(+). Its pathway is cofactor biosynthesis; thiamine diphosphate biosynthesis. Its function is as follows. Catalyzes the rearrangement of 1-deoxy-D-xylulose 5-phosphate (DXP) to produce the thiazole phosphate moiety of thiamine. Sulfur is provided by the thiocarboxylate moiety of the carrier protein ThiS. In vitro, sulfur can be provided by H(2)S. The chain is Thiazole synthase from Rhizobium etli (strain ATCC 51251 / DSM 11541 / JCM 21823 / NBRC 15573 / CFN 42).